A 302-amino-acid polypeptide reads, in one-letter code: Beta-lactamase (302 aa).

Over residues 1–11 (MADRRRVHAWA) the composition is skewed to basic residues. Residues 1–29 (MADRRRVHAWARARPAAPEPAPPTPSAAA) form the signal peptide. Positions 1–43 (MADRRRVHAWARARPAAPEPAPPTPSAAAPSVAPGPAATPPDP) are disordered. The span at 26–36 (SAAAPSVAPGP) shows a compositional bias: low complexity. S85 acts as the Acyl-ester intermediate in catalysis. S143 is a binding site for substrate. E179 functions as the Proton acceptor in the catalytic mechanism. 247–249 (KTG) contributes to the substrate binding site.

Belongs to the class-A beta-lactamase family.

It localises to the secreted. It catalyses the reaction a beta-lactam + H2O = a substituted beta-amino acid. In terms of biological role, active on penicillins but not on cephalosporins. This Amycolatopsis lactamdurans (Nocardia lactamdurans) protein is Beta-lactamase (bla).